A 206-amino-acid polypeptide reads, in one-letter code: Protein GET1 (206 aa).

At 1-4 (MPSL) the chain is on the lumenal side. The chain crosses the membrane as a helical span at residues 5-24 (LITVLFLNVIIYVVNTVGAA). Topologically, residues 25-110 (TVDGLLWLLY…TFDMTIKIAR (86 aa)) are cytoplasmic. Positions 75-100 (AKLRRRHDKALEAYEAKNNELTQSKS) form a coiled coil. The chain crosses the membrane as a helical span at residues 111–131 (WAATSGLMLFLQFWYSKTPIF). The Lumenal portion of the chain corresponds to 132-155 (TLPPGWIPWQVQWVLSFPRAPMGT). A helical transmembrane segment spans residues 156 to 172 (VSIQIWGGACATVVALV). Topologically, residues 173–206 (GDAMKASLAYVSKPKIDRIKLGATMEGKEGKKRQ) are cytoplasmic.

The protein belongs to the WRB/GET1 family. As to quaternary structure, interacts with GET3.

The protein localises to the endoplasmic reticulum membrane. Its function is as follows. Required for the post-translational delivery of tail-anchored (TA) proteins to the endoplasmic reticulum. Acts as a membrane receptor for soluble GET3, which recognizes and selectively binds the transmembrane domain of TA proteins in the cytosol. In Ajellomyces capsulatus (strain G186AR / H82 / ATCC MYA-2454 / RMSCC 2432) (Darling's disease fungus), this protein is Protein GET1.